The chain runs to 176 residues: Cytochrome b (176 aa).

The next 3 membrane-spanning stretches (helical) occupy residues 33–53, 77–98, and 113–133; these read FGSL…FLAM, WLLR…YLHI, and WNVG…GYVL. Heme b is bound by residues H83 and H97.

The protein belongs to the cytochrome b family. As to quaternary structure, the cytochrome bc1 complex contains 11 subunits: 3 respiratory subunits (MT-CYB, CYC1 and UQCRFS1), 2 core proteins (UQCRC1 and UQCRC2) and 6 low-molecular weight proteins (UQCRH/QCR6, UQCRB/QCR7, UQCRQ/QCR8, UQCR10/QCR9, UQCR11/QCR10 and a cleavage product of UQCRFS1). This cytochrome bc1 complex then forms a dimer. Heme b serves as cofactor.

The protein resides in the mitochondrion inner membrane. Functionally, component of the ubiquinol-cytochrome c reductase complex (complex III or cytochrome b-c1 complex) that is part of the mitochondrial respiratory chain. The b-c1 complex mediates electron transfer from ubiquinol to cytochrome c. Contributes to the generation of a proton gradient across the mitochondrial membrane that is then used for ATP synthesis. This Promops centralis (Big crested mastiff bat) protein is Cytochrome b (MT-CYB).